Consider the following 157-residue polypeptide: MSQVILDLQIACADSQGLPTEGDFQRWLEAVLPLFQPVSEVTIRLVDEAESHDLNLTYRGKDKSTNVLSFPFEAPPEIELPLLGDLIICRQVVEKEAIEQEKALLAHWAHMVVHGSLHLLGYDHIDDDEAEEMELIETEIMHGLGYPDPYISEKDPD.

Zn(2+) is bound by residues H114, H118, and H124.

It belongs to the endoribonuclease YbeY family. It depends on Zn(2+) as a cofactor.

Its subcellular location is the cytoplasm. Single strand-specific metallo-endoribonuclease involved in late-stage 70S ribosome quality control and in maturation of the 3' terminus of the 16S rRNA. This chain is Endoribonuclease YbeY, found in Yersinia pseudotuberculosis serotype O:1b (strain IP 31758).